The following is a 276-amino-acid chain: Large ribosomal subunit protein uL2 (276 aa).

The disordered stretch occupies residues 224-265 (VMNPVDHPHGGGEGRTASGRHPVSPWGLPTKGYKTRNNKRTD).

The protein belongs to the universal ribosomal protein uL2 family. Part of the 50S ribosomal subunit. Forms a bridge to the 30S subunit in the 70S ribosome.

In terms of biological role, one of the primary rRNA binding proteins. Required for association of the 30S and 50S subunits to form the 70S ribosome, for tRNA binding and peptide bond formation. It has been suggested to have peptidyltransferase activity; this is somewhat controversial. Makes several contacts with the 16S rRNA in the 70S ribosome. The sequence is that of Large ribosomal subunit protein uL2 from Dichelobacter nodosus (strain VCS1703A).